The chain runs to 579 residues: Laccase-24 (579 aa).

The signal sequence occupies residues Met-1 to Ala-23. 2 Plastocyanin-like domains span residues Asn-31 to Gly-148 and Glu-159 to Gly-322. Asn-34 and Asn-78 each carry an N-linked (GlcNAc...) asparagine glycan. Cu cation is bound by residues His-82 and His-84. N-linked (GlcNAc...) asparagine glycosylation is found at Asn-110 and Asn-116. 2 residues coordinate Cu cation: His-127 and His-129. Asn-204, Asn-209, Asn-219, Asn-241, Asn-312, Asn-337, Asn-348, Asn-398, Asn-405, Asn-444, and Asn-462 each carry an N-linked (GlcNAc...) asparagine glycan. A Plastocyanin-like 3 domain is found at Asp-425–Pro-563. Cu cation-binding residues include His-480, His-483, and His-485. The N-linked (GlcNAc...) asparagine glycan is linked to Asn-500. Cu cation contacts are provided by His-542, Cys-543, His-544, and His-548.

Belongs to the multicopper oxidase family. Requires Cu cation as cofactor.

It localises to the secreted. The protein resides in the extracellular space. The protein localises to the apoplast. It carries out the reaction 4 hydroquinone + O2 = 4 benzosemiquinone + 2 H2O. Functionally, lignin degradation and detoxification of lignin-derived products. The sequence is that of Laccase-24 (LAC24) from Oryza sativa subsp. japonica (Rice).